We begin with the raw amino-acid sequence, 165 residues long: NADPH-dependent 7-cyano-7-deazaguanine reductase (165 aa).

Cysteine 56 functions as the Thioimide intermediate in the catalytic mechanism. The Proton donor role is filled by aspartate 63. Substrate contacts are provided by residues 78–80 (VES) and 97–98 (HE).

It belongs to the GTP cyclohydrolase I family. QueF type 1 subfamily.

The protein localises to the cytoplasm. The catalysed reaction is 7-aminomethyl-7-carbaguanine + 2 NADP(+) = 7-cyano-7-deazaguanine + 2 NADPH + 3 H(+). It functions in the pathway tRNA modification; tRNA-queuosine biosynthesis. Functionally, catalyzes the NADPH-dependent reduction of 7-cyano-7-deazaguanine (preQ0) to 7-aminomethyl-7-deazaguanine (preQ1). This Bacillus pumilus (strain SAFR-032) protein is NADPH-dependent 7-cyano-7-deazaguanine reductase.